We begin with the raw amino-acid sequence, 264 residues long: Glutamate racemase (264 aa).

Substrate contacts are provided by residues 10–11 (DS) and 42–43 (YG). Residue cysteine 73 is the Proton donor/acceptor of the active site. 74–75 (NT) contacts substrate. Catalysis depends on cysteine 183, which acts as the Proton donor/acceptor. Residue 184-185 (TH) coordinates substrate.

Belongs to the aspartate/glutamate racemases family.

It carries out the reaction L-glutamate = D-glutamate. It participates in cell wall biogenesis; peptidoglycan biosynthesis. Functionally, provides the (R)-glutamate required for cell wall biosynthesis. This Streptococcus pyogenes serotype M4 (strain MGAS10750) protein is Glutamate racemase.